Reading from the N-terminus, the 479-residue chain is GTPase Obg (479 aa).

The Obg domain maps to P2–V159. The OBG-type G domain occupies A160–S340. GTP-binding positions include G166–S173, F191–V195, D212–G215, N292–D295, and S321–A323. Mg(2+) contacts are provided by S173 and T193. The 79-residue stretch at P358–P436 folds into the OCT domain. Residues W434 to G479 form a disordered region. Positions T451–A468 are enriched in basic and acidic residues. Basic residues predominate over residues A469 to G479.

The protein belongs to the TRAFAC class OBG-HflX-like GTPase superfamily. OBG GTPase family. In terms of assembly, monomer. Mg(2+) is required as a cofactor.

The protein localises to the cytoplasm. In terms of biological role, an essential GTPase which binds GTP, GDP and possibly (p)ppGpp with moderate affinity, with high nucleotide exchange rates and a fairly low GTP hydrolysis rate. Plays a role in control of the cell cycle, stress response, ribosome biogenesis and in those bacteria that undergo differentiation, in morphogenesis control. This is GTPase Obg from Mycobacterium tuberculosis (strain ATCC 25177 / H37Ra).